The chain runs to 292 residues: AhcY transcriptional activator HvrB (292 aa).

Residues 10–67 (PPLTALRAFAATASEGGFSAAARKLNVTHAAIAQQVRALEADLDVPLVWRDGKHLHLT) enclose the HTH lysR-type domain. A DNA-binding region (H-T-H motif) is located at residues 27–46 (FSAAARKLNVTHAAIAQQVR).

It belongs to the LysR transcriptional regulatory family.

Its function is as follows. Functions as a low-light activator of ahcY expression (gene for S-adenosyl-L-homocysteine hydrolase) and as a high-light activator of an uncharacterized 21.6 kDa protein in the ahcY-hvrB intergenic region (orf5). It is also a negative regulator of its own expression. In Rhodobacter capsulatus (strain ATCC BAA-309 / NBRC 16581 / SB1003), this protein is AhcY transcriptional activator HvrB (hvrB).